Consider the following 234-residue polypeptide: Leucyl/phenylalanyl-tRNA--protein transferase (234 aa).

This sequence belongs to the L/F-transferase family.

It is found in the cytoplasm. It carries out the reaction N-terminal L-lysyl-[protein] + L-leucyl-tRNA(Leu) = N-terminal L-leucyl-L-lysyl-[protein] + tRNA(Leu) + H(+). The enzyme catalyses N-terminal L-arginyl-[protein] + L-leucyl-tRNA(Leu) = N-terminal L-leucyl-L-arginyl-[protein] + tRNA(Leu) + H(+). It catalyses the reaction L-phenylalanyl-tRNA(Phe) + an N-terminal L-alpha-aminoacyl-[protein] = an N-terminal L-phenylalanyl-L-alpha-aminoacyl-[protein] + tRNA(Phe). In terms of biological role, functions in the N-end rule pathway of protein degradation where it conjugates Leu, Phe and, less efficiently, Met from aminoacyl-tRNAs to the N-termini of proteins containing an N-terminal arginine or lysine. This Dechloromonas aromatica (strain RCB) protein is Leucyl/phenylalanyl-tRNA--protein transferase.